A 334-amino-acid polypeptide reads, in one-letter code: D-fructose 1,6-bisphosphatase class 2/sedoheptulose 1,7-bisphosphatase (334 aa).

Residues Asp-33, Glu-57, Asp-85, and Glu-88 each contribute to the Mn(2+) site. Substrate-binding positions include Glu-88–Thr-90, Tyr-119, Arg-164–Arg-166, and Asp-186–Asp-188. Glu-213 is a binding site for Mn(2+).

Belongs to the FBPase class 2 family. As to quaternary structure, homotetramer. It depends on Mn(2+) as a cofactor.

It carries out the reaction beta-D-fructose 1,6-bisphosphate + H2O = beta-D-fructose 6-phosphate + phosphate. It catalyses the reaction D-sedoheptulose 1,7-bisphosphate + H2O = D-sedoheptulose 7-phosphate + phosphate. It functions in the pathway carbohydrate biosynthesis; Calvin cycle. Functionally, catalyzes the hydrolysis of fructose 1,6-bisphosphate (Fru 1,6-P2) and sedoheptulose 1,7-bisphosphate (Sed 1,7-P2) to fructose 6-phosphate and sedoheptulose 7-phosphate, respectively. The sequence is that of D-fructose 1,6-bisphosphatase class 2/sedoheptulose 1,7-bisphosphatase from Prochlorococcus marinus (strain NATL1A).